Reading from the N-terminus, the 258-residue chain is Neurotrophin-3 (258 aa).

An N-terminal signal peptide occupies residues 1–18; the sequence is MSILFYVIFLAYLRGIQG. A propeptide spanning residues 19 to 139 is cleaved from the precursor; that stretch reads NNMDQRSLPE…TNRTSPRRKR (121 aa). The segment at 60 to 85 is disordered; that stretch reads QSTLPKAEAPREPEQGEATRSEFQPM. Over residues 67–79 the composition is skewed to basic and acidic residues; it reads EAPREPEQGEATR. Asparagine 131 is a glycosylation site (N-linked (GlcNAc...) asparagine). 3 disulfides stabilise this stretch: cysteine 153/cysteine 218, cysteine 196/cysteine 247, and cysteine 206/cysteine 249.

Belongs to the NGF-beta family. As to expression, brain and peripheral tissues.

It localises to the secreted. Its function is as follows. Seems to promote the survival of visceral and proprioceptive sensory neurons. The sequence is that of Neurotrophin-3 (Ntf3) from Rattus norvegicus (Rat).